The following is a 474-amino-acid chain: tRNA-2-methylthio-N(6)-dimethylallyladenosine synthase (474 aa).

The region spanning 3–120 (KKLHIKTWGC…LPEMINSVRG (118 aa)) is the MTTase N-terminal domain. [4Fe-4S] cluster contacts are provided by Cys12, Cys49, Cys83, Cys157, Cys161, and Cys164. The 233-residue stretch at 143-375 (RAEGPTAFVS…QERINQQAMA (233 aa)) folds into the Radical SAM core domain. Residues 378 to 441 (RRMLGTTQRI…PNSLRGKVVR (64 aa)) enclose the TRAM domain.

The protein belongs to the methylthiotransferase family. MiaB subfamily. As to quaternary structure, monomer. Requires [4Fe-4S] cluster as cofactor.

Its subcellular location is the cytoplasm. The enzyme catalyses N(6)-dimethylallyladenosine(37) in tRNA + (sulfur carrier)-SH + AH2 + 2 S-adenosyl-L-methionine = 2-methylsulfanyl-N(6)-dimethylallyladenosine(37) in tRNA + (sulfur carrier)-H + 5'-deoxyadenosine + L-methionine + A + S-adenosyl-L-homocysteine + 2 H(+). Functionally, catalyzes the methylthiolation of N6-(dimethylallyl)adenosine (i(6)A), leading to the formation of 2-methylthio-N6-(dimethylallyl)adenosine (ms(2)i(6)A) at position 37 in tRNAs that read codons beginning with uridine. This is tRNA-2-methylthio-N(6)-dimethylallyladenosine synthase from Shigella boydii serotype 4 (strain Sb227).